We begin with the raw amino-acid sequence, 217 residues long: Probable transaldolase (217 aa).

The Schiff-base intermediate with substrate role is filled by Lys83.

The protein belongs to the transaldolase family. Type 3B subfamily.

Its subcellular location is the cytoplasm. The enzyme catalyses D-sedoheptulose 7-phosphate + D-glyceraldehyde 3-phosphate = D-erythrose 4-phosphate + beta-D-fructose 6-phosphate. It participates in carbohydrate degradation; pentose phosphate pathway; D-glyceraldehyde 3-phosphate and beta-D-fructose 6-phosphate from D-ribose 5-phosphate and D-xylulose 5-phosphate (non-oxidative stage): step 2/3. Transaldolase is important for the balance of metabolites in the pentose-phosphate pathway. This is Probable transaldolase from Brucella anthropi (strain ATCC 49188 / DSM 6882 / CCUG 24695 / JCM 21032 / LMG 3331 / NBRC 15819 / NCTC 12168 / Alc 37) (Ochrobactrum anthropi).